The chain runs to 348 residues: MASGKAGGASALFSEATQAEQLDSHTYRVNLNQGFCIGAVPNGGYTSACMLAAASKHLGPRGQPDTLTAHFEYPNRTSTGPAIVVIEDVKLGRQISTLHLTLWQGGLLSQAPWIDRSVSRRIVLAYTTHTNLRTFSGISMPTGYEVTPAAELPSVSDFEALKTHGADDAWAESKLPKGWAAMMLSLTQWRFYVPRKEPLSPGVLDMWIRLASGEKITQGALAYVVDSFPHNMHTFLAAPALRELLNASPERSGDSEVKDVRKKDQQRAEMWFPTVVMNIEAKTALPEEGVEWLSVRVSSKQIKEGKFDLEVLVRDTDGEMVALSNHVAMILSVERNTGKKSGSSKASL.

It functions in the pathway secondary metabolite biosynthesis. Its function is as follows. Thioesterase-like protein; part of the gene cluster that mediates the biosynthesis of wortmanamides A and B, reduced long-chain polyketides amidated with a specific omega-amino acid, 5-aminopentanoic acid (5PA). The PKS modules of TwmB are involved in the synthesis of the polyketide backbone, whereas the non-canonical C domain of TwmB is a bonafide condensation domain that specifically selects 5PA and catalyzes amidation to release polyketide chain. The C domain clearly prefers C16 and C18 fatty acyl substrates, which is consistent with simultaneous formation of both octaketide and nonaketide acyl amides wortmanamides A and B. Because TwmB lacks a designated enoylreductase (ER) domain, the required activity is provided the enoyl reductase TwmE. The roles of the remaining enzymes have still to be clarified. The polypeptide is Thioesterase-like protein TwmA (Talaromyces wortmannii (Penicillium wortmannii)).